A 275-amino-acid chain; its full sequence is Probable histone chaperone asf-1 (275 aa).

Composition is skewed to acidic residues over residues 157 to 166, 183 to 207, and 230 to 247; these read EDPVAEPVED, DGQE…EVDL, and KMED…DDEP. The tract at residues 157-275 is disordered; it reads EDPVAEPVED…SDKTNNEMVQ (119 aa). Residues 265–275 show a composition bias toward basic and acidic residues; the sequence is LSDKTNNEMVQ.

The protein belongs to the ASF1 family. As to quaternary structure, interacts with histone H3 and histone H4.

It localises to the nucleus. Its function is as follows. Histone chaperone that facilitates histone deposition and histone exchange and removal during nucleosome assembly and disassembly. The sequence is that of Probable histone chaperone asf-1 from Caenorhabditis elegans.